A 372-amino-acid chain; its full sequence is Cytochrome b (372 aa).

Transmembrane regions (helical) follow at residues 25 to 45, 69 to 90, 105 to 125, and 170 to 190; these read FGSM…FLAI, WIMQ…YIHI, WLSG…GYVL, and FFAL…IHII. The heme b site is built by histidine 75 and histidine 89. The heme b site is built by histidine 174 and histidine 188. Histidine 193 is a binding site for a ubiquinone. A run of 4 helical transmembrane segments spans residues 218–238, 280–300, 312–332, and 339–358; these read YKDM…LSFS, LGGA…PFTH, LSQI…WTAS, and FISI…ITIP.

Belongs to the cytochrome b family. The cytochrome bc1 complex contains 3 respiratory subunits (MT-CYB, CYC1 and UQCRFS1), 2 core proteins (UQCRC1 and UQCRC2) and probably 6 low-molecular weight proteins. It depends on heme b as a cofactor.

It is found in the mitochondrion inner membrane. Its function is as follows. Component of the ubiquinol-cytochrome c reductase complex (complex III or cytochrome b-c1 complex) that is part of the mitochondrial respiratory chain. The b-c1 complex mediates electron transfer from ubiquinol to cytochrome c. Contributes to the generation of a proton gradient across the mitochondrial membrane that is then used for ATP synthesis. In Naja annulata annulata (Banded water cobra), this protein is Cytochrome b (MT-CYB).